We begin with the raw amino-acid sequence, 116 residues long: PTS system galactose-specific EIIA component (116 aa).

Positions 11–109 (DDYMGVVMGI…AVEVVGQERR (99 aa)) constitute a PTS EIIA type-3 domain. Residue His85 is the Tele-phosphohistidine intermediate of the active site. Phosphohistidine; by HPr is present on His85. Mg(2+) is bound at residue Asp88.

In terms of assembly, homotrimer. Mg(2+) serves as cofactor.

In terms of biological role, the phosphoenolpyruvate-dependent sugar phosphotransferase system (sugar PTS), a major carbohydrate active transport system, catalyzes the phosphorylation of incoming sugar substrates concomitantly with their translocation across the cell membrane. Involved in galactose transport with PtcB and Lmg_0963. This Lactococcus lactis subsp. cremoris (strain MG1363) protein is PTS system galactose-specific EIIA component.